Consider the following 301-residue polypeptide: MKRDIISVYDMKDDLEDIIELSIKLKKDRTIKFSEKKILAMIFEKPSTRTRNSLEVAMEQLNGHAIYLNPNDMQIGRGETIADTARVLSRFVDIISYRAFNHDDVVELARHATVPVLNALDNLEHPMQIVADFMTVYEKKHRLKGLKLAYIGDGNNMANSLLLGSSILGVDISIACPKGFEPNKEILRQAREISLKTGNKIEITDDPRIAVEASDIIYTDVWVSMGEENERENKERIFMPYQVNEDLTENANRDYIFMHCLPAHRGLEVTAGVIDGIHSVVFDEAENRIYSEKGIIYKLLS.

Carbamoyl phosphate contacts are provided by residues 47-50 (STRT), Gln-74, Arg-98, and 125-128 (HPMQ). Residues Asn-156, Asp-220, and 224-225 (SM) each bind L-ornithine. Residues 260 to 261 (CL) and Arg-288 contribute to the carbamoyl phosphate site.

This sequence belongs to the aspartate/ornithine carbamoyltransferase superfamily. OTCase family.

The protein resides in the cytoplasm. It catalyses the reaction carbamoyl phosphate + L-ornithine = L-citrulline + phosphate + H(+). Its pathway is amino-acid biosynthesis; L-arginine biosynthesis; L-arginine from L-ornithine and carbamoyl phosphate: step 1/3. Reversibly catalyzes the transfer of the carbamoyl group from carbamoyl phosphate (CP) to the N(epsilon) atom of ornithine (ORN) to produce L-citrulline. The protein is Ornithine carbamoyltransferase of Picrophilus torridus (strain ATCC 700027 / DSM 9790 / JCM 10055 / NBRC 100828 / KAW 2/3).